The following is a 224-amino-acid chain: BOS complex subunit TMEM147 (224 aa).

The helical transmembrane segment at 1–21 (MTLFHFGNCFALAYFPYFITY) threads the bilayer. Residues 22 to 34 (KCSGLSEYNAFWK) are Cytoplasmic-facing. A helical transmembrane segment spans residues 35–58 (CVQAGVTYLFVQLCKMLFLATFFP). At 59-66 (TWEGGIYD) the chain is on the lumenal side. Residues 67 to 88 (FIGEFMKASVDVADLIGLNLVM) traverse the membrane as a helical segment. Residues 89–98 (SRNAGKGEYK) lie on the Cytoplasmic side of the membrane. A helical transmembrane segment spans residues 99-124 (IMVAALGWATAELIMSRCIPLWVGAR). Topologically, residues 125–129 (GIEFD) are lumenal. Residues 130 to 155 (WKYIQMSIDSNISLVHYIVASAQVWM) form a helical membrane-spanning segment. Topologically, residues 156-164 (ITRYDLYHT) are cytoplasmic. Residues 165–187 (FRPAVLLLMFLSVYKAFVMETFV) form a helical membrane-spanning segment. Residues 188–194 (HLCSLGS) are Lumenal-facing. The chain crosses the membrane as a helical span at residues 195 to 216 (WAALLARAVVTGLLALSTLALY). Over 217–224 (VAVVNVHS) the chain is Cytoplasmic.

It belongs to the TMEM147 family. In terms of assembly, component of the back of Sec61 (BOS) complex, composed of NCLN/Nicalin, NOMO (NOMO1, NOMO2 or NOMO3) and TMEM147. The BOS complex is part of the multi-pass translocon (MPT) complex, composed of three subcomplexes, the GEL complex (composed of RAB5IF/OPTI and TMCO1), the BOS complex (composed of NCLN/Nicalin, NOMO and TMEM147) and the PAT complex (composed of WDR83OS/Asterix and CCDC47). The MPT complex associates with the SEC61 complex. Interacts with CHRM3, CHRM1 and AVPR2. Interacts with LBR; promoting LBR localization to the nucleus inner membrane. Interacts with DHCR7.

It localises to the endoplasmic reticulum membrane. Its subcellular location is the nucleus membrane. It is found in the cell membrane. Functionally, component of the multi-pass translocon (MPT) complex that mediates insertion of multi-pass membrane proteins into the lipid bilayer of membranes. The MPT complex takes over after the SEC61 complex: following membrane insertion of the first few transmembrane segments of proteins by the SEC61 complex, the MPT complex occludes the lateral gate of the SEC61 complex to promote insertion of subsequent transmembrane regions. Also acts as a negative regulator of CHRM3 function, most likely by interfering with its trafficking to the cell membrane. Negatively regulates CHRM3-mediated calcium mobilization and activation of RPS6KA1/p90RSK activity. Regulates LBR localization to the nucleus inner membrane. In Homo sapiens (Human), this protein is BOS complex subunit TMEM147.